We begin with the raw amino-acid sequence, 77 residues long: uncharacterized protein (77 aa).

This is an uncharacterized protein from Bos taurus (Bovine).